Consider the following 439-residue polypeptide: MKKNLRIVSAAAAALLAVAPIAATAMPVNAATTINADSAINANTNAKYDVDVTPSISAIAAVAKSDTMPAIPGSLTGSISASYNGKSYTANLPKDSGNATITDSNNNTVKPAELEADKAYTVTVPDVSFNFGSENAGKEITIGSANPNVTFTEKTGDQPASTVKVTLDQDGVAKLSSVQIKNVYAIDTTYNSNVNFYDVTTGATVTTGAVSIDADNQGQLNITSVVAAINSKYFAAQYDKKQLTNVTFDTETAVKDALKAQKIEVSSVGYFKAPHTFTVNVKATSNKNGKSATLPVTVTVPNVADPVVPSQSKTIMHNAYFYDKDAKRVGTDKVTRYNTVTVAMNTTKLANGISYYEVIENGKATGKYINADNIDGTKRTLKHNAYVYKTSKKRANKVVLKKGTEVTTYGGSYKFKNGQRYYKIGANTEKTYVKVANFE.

The N-terminal stretch at 1-30 is a signal peptide; it reads MKKNLRIVSAAAAALLAVAPIAATAMPVNA.

Post-translationally, glycosylated.

The protein localises to the secreted. The protein resides in the cell wall. It is found in the S-layer. Functionally, the S-layer is a paracrystalline mono-layered assembly of proteins which coat the surface of bacteria. The chain is S-layer protein (slpH) from Lactobacillus helveticus (Lactobacillus suntoryeus).